Here is a 261-residue protein sequence, read N- to C-terminus: Hemin import ATP-binding protein HmuV (261 aa).

The ABC transporter domain maps to 5 to 241 (LTANAASFAI…DLLARVFDVD (237 aa)). 37–44 (GPNGAGKS) contacts ATP.

It belongs to the ABC transporter superfamily. Heme (hemin) importer (TC 3.A.1.14.5) family. In terms of assembly, the complex is composed of two ATP-binding proteins (HmuV), two transmembrane proteins (HmuU) and a solute-binding protein (HmuT).

It is found in the cell inner membrane. In terms of biological role, part of the ABC transporter complex HmuTUV involved in hemin import. Responsible for energy coupling to the transport system. In Rhodopseudomonas palustris (strain BisB5), this protein is Hemin import ATP-binding protein HmuV.